We begin with the raw amino-acid sequence, 293 residues long: ATP synthase subunit a (293 aa).

Helical transmembrane passes span glutamine 39–isoleucine 59, phenylalanine 73–glycine 93, tyrosine 102–isoleucine 122, serine 128–isoleucine 148, threonine 172–leucine 192, isoleucine 198–threonine 218, leucine 224–phenylalanine 244, and aspartate 245–alanine 265.

The protein belongs to the ATPase A chain family. In terms of assembly, F-type ATPases have 2 components, CF(1) - the catalytic core - and CF(0) - the membrane proton channel. CF(1) has five subunits: alpha(3), beta(3), gamma(1), delta(1), epsilon(1). CF(0) has three main subunits: a(1), b(2) and c(9-12). The alpha and beta chains form an alternating ring which encloses part of the gamma chain. CF(1) is attached to CF(0) by a central stalk formed by the gamma and epsilon chains, while a peripheral stalk is formed by the delta and b chains.

The protein resides in the cell membrane. Its function is as follows. Key component of the proton channel; it plays a direct role in the translocation of protons across the membrane. The polypeptide is ATP synthase subunit a (Mycoplasma pneumoniae (strain ATCC 29342 / M129 / Subtype 1) (Mycoplasmoides pneumoniae)).